Consider the following 240-residue polypeptide: Probable 2-phosphosulfolactate phosphatase (240 aa).

The protein belongs to the ComB family. Mg(2+) serves as cofactor.

The enzyme catalyses (2R)-O-phospho-3-sulfolactate + H2O = (2R)-3-sulfolactate + phosphate. The protein is Probable 2-phosphosulfolactate phosphatase of Clostridium kluyveri (strain NBRC 12016).